Consider the following 290-residue polypeptide: 4-hydroxybenzoate octaprenyltransferase (290 aa).

Transmembrane regions (helical) follow at residues 33–53 (LWAL…AVFV), 99–119 (LFVV…TMTI), 141–161 (LPQV…FAAV), 163–183 (ESVP…AVAY), 213–233 (FIIG…GWLN), 237–257 (WGYY…QKLI), and 268–288 (AFMN…MSYW).

The protein belongs to the UbiA prenyltransferase family. Mg(2+) serves as cofactor.

The protein localises to the cell inner membrane. The catalysed reaction is all-trans-octaprenyl diphosphate + 4-hydroxybenzoate = 4-hydroxy-3-(all-trans-octaprenyl)benzoate + diphosphate. Its pathway is cofactor biosynthesis; ubiquinone biosynthesis. Its function is as follows. Catalyzes the prenylation of para-hydroxybenzoate (PHB) with an all-trans polyprenyl group. Mediates the second step in the final reaction sequence of ubiquinone-8 (UQ-8) biosynthesis, which is the condensation of the polyisoprenoid side chain with PHB, generating the first membrane-bound Q intermediate 3-octaprenyl-4-hydroxybenzoate. The polypeptide is 4-hydroxybenzoate octaprenyltransferase (Escherichia fergusonii (strain ATCC 35469 / DSM 13698 / CCUG 18766 / IAM 14443 / JCM 21226 / LMG 7866 / NBRC 102419 / NCTC 12128 / CDC 0568-73)).